Here is a 234-residue protein sequence, read N- to C-terminus: tRNA (guanine-N(1)-)-methyltransferase (234 aa).

Residues G115 and 135–140 contribute to the S-adenosyl-L-methionine site; that span reads VGDYIL.

It belongs to the RNA methyltransferase TrmD family. As to quaternary structure, homodimer.

Its subcellular location is the cytoplasm. It catalyses the reaction guanosine(37) in tRNA + S-adenosyl-L-methionine = N(1)-methylguanosine(37) in tRNA + S-adenosyl-L-homocysteine + H(+). In terms of biological role, specifically methylates guanosine-37 in various tRNAs. The chain is tRNA (guanine-N(1)-)-methyltransferase from Rickettsia typhi (strain ATCC VR-144 / Wilmington).